Here is a 310-residue protein sequence, read N- to C-terminus: p-hydroxybenzoic acid efflux pump subunit AaeA (310 aa).

A helical transmembrane segment spans residues 12–32 (AITVVLVILAFIAIFNAWVYY).

Belongs to the membrane fusion protein (MFP) (TC 8.A.1) family.

It is found in the cell inner membrane. Forms an efflux pump with AaeB. The protein is p-hydroxybenzoic acid efflux pump subunit AaeA of Escherichia coli O17:K52:H18 (strain UMN026 / ExPEC).